The chain runs to 279 residues: Zinc-finger homeodomain protein 1 (279 aa).

The segment covering 1-13 (MDFDDHDDGDEEM) has biased composition (acidic residues). The segment at 1–47 (MDFDDHDDGDEEMPPMPVSSSYETPPQHGLAGGGMAPKPPGEIGSHV) is disordered. A ZF-HD dimerization-type; degenerate zinc finger spans residues 57–106 (YRECLKNHAVGIGGHAVDGCGEFMAAGEEGTIDALRCAACNCHRNFHRKE). Positions 157-191 (AAAAAAGGHPQRPLALPSTSHSGRDDGDDLSGMVG) are disordered. The segment at residues 215 to 278 (KKRFRTKFTQ…NNKHTLGKKL (64 aa)) is a DNA-binding region (homeobox).

As to quaternary structure, homo- and heterodimer with other ZFHD proteins.

It is found in the nucleus. Its function is as follows. Putative transcription factor. This chain is Zinc-finger homeodomain protein 1 (ZHD1), found in Oryza sativa subsp. indica (Rice).